Consider the following 167-residue polypeptide: S-ribosylhomocysteine lyase (167 aa).

Fe cation is bound by residues His-54, His-58, and Cys-128.

Belongs to the LuxS family. As to quaternary structure, homodimer. The cofactor is Fe cation.

The enzyme catalyses S-(5-deoxy-D-ribos-5-yl)-L-homocysteine = (S)-4,5-dihydroxypentane-2,3-dione + L-homocysteine. Involved in the synthesis of autoinducer 2 (AI-2) which is secreted by bacteria and is used to communicate both the cell density and the metabolic potential of the environment. The regulation of gene expression in response to changes in cell density is called quorum sensing. Catalyzes the transformation of S-ribosylhomocysteine (RHC) to homocysteine (HC) and 4,5-dihydroxy-2,3-pentadione (DPD). The polypeptide is S-ribosylhomocysteine lyase (Haemophilus influenzae (strain 86-028NP)).